The following is a 164-amino-acid chain: PTS system sorbose-specific EIIB component (164 aa).

A PTS EIIB type-4 domain is found at 1–164 (MQITLARIDD…DKINETAFCE (164 aa)). H14 (pros-phosphohistidine intermediate) is an active-site residue. Residue H14 is modified to Phosphohistidine; by EIIA.

As to quaternary structure, dimer of dimers.

The protein localises to the cytoplasm. The catalysed reaction is keto-L-sorbose(out) + N(pros)-phospho-L-histidyl-[protein] = L-sorbose 1-phosphate(in) + L-histidyl-[protein]. Functionally, the phosphoenolpyruvate-dependent sugar phosphotransferase system (PTS), a major carbohydrate active transport system, catalyzes the phosphorylation of incoming sugar substrates concomitant with their translocation across the cell membrane. The enzyme II SorABFM PTS system is involved in L-sorbose transport. The protein is PTS system sorbose-specific EIIB component of Klebsiella pneumoniae.